A 238-amino-acid chain; its full sequence is Ribonuclease PH (238 aa).

Phosphate contacts are provided by residues R86 and 124–126 (GTR).

It belongs to the RNase PH family. As to quaternary structure, homohexameric ring arranged as a trimer of dimers.

It catalyses the reaction tRNA(n+1) + phosphate = tRNA(n) + a ribonucleoside 5'-diphosphate. Phosphorolytic 3'-5' exoribonuclease that plays an important role in tRNA 3'-end maturation. Removes nucleotide residues following the 3'-CCA terminus of tRNAs; can also add nucleotides to the ends of RNA molecules by using nucleoside diphosphates as substrates, but this may not be physiologically important. Probably plays a role in initiation of 16S rRNA degradation (leading to ribosome degradation) during starvation. This Acinetobacter baylyi (strain ATCC 33305 / BD413 / ADP1) protein is Ribonuclease PH.